A 1072-amino-acid polypeptide reads, in one-letter code: Carbamoyl phosphate synthase large chain (1072 aa).

The tract at residues 1 to 401 is carboxyphosphate synthetic domain; sequence MPKRLDINTI…SLLKAVRSLE (401 aa). Residues Arg129, Arg169, Gly175, Gly176, Lys208, Ile210, Glu215, Gly241, Val242, His243, Gln284, and Glu298 each contribute to the ATP site. The 195-residue stretch at 133 to 327 folds into the ATP-grasp 1 domain; the sequence is RTLMQELNEP…IAKLAAKIAV (195 aa). The Mg(2+) site is built by Gln284, Glu298, and Asn300. 3 residues coordinate Mn(2+): Gln284, Glu298, and Asn300. An oligomerization domain region spans residues 402–546; it reads LGIYHLELDH…YSTYADENES (145 aa). The tract at residues 547-929 is carbamoyl phosphate synthetic domain; sequence IVTDRKSVVV…ALYKGLVASG (383 aa). Residues 671-861 form the ATP-grasp 2 domain; sequence EAALTKLGIP…MANVATKVIL (191 aa). Positions 707, 746, 752, 777, 778, 779, 780, 820, and 832 each coordinate ATP. Mg(2+) is bound by residues Gln820, Glu832, and Asn834. Residues Gln820, Glu832, and Asn834 each coordinate Mn(2+). Residues 930–1072 enclose the MGS-like domain; sequence INIPTHGSVI…QTKRHEVVHA (143 aa). The allosteric domain stretch occupies residues 930–1072; sequence INIPTHGSVI…QTKRHEVVHA (143 aa).

Belongs to the CarB family. Composed of two chains; the small (or glutamine) chain promotes the hydrolysis of glutamine to ammonia, which is used by the large (or ammonia) chain to synthesize carbamoyl phosphate. Tetramer of heterodimers (alpha,beta)4. It depends on Mg(2+) as a cofactor. Mn(2+) serves as cofactor.

The catalysed reaction is hydrogencarbonate + L-glutamine + 2 ATP + H2O = carbamoyl phosphate + L-glutamate + 2 ADP + phosphate + 2 H(+). It carries out the reaction hydrogencarbonate + NH4(+) + 2 ATP = carbamoyl phosphate + 2 ADP + phosphate + 2 H(+). The protein operates within amino-acid biosynthesis; L-arginine biosynthesis; carbamoyl phosphate from bicarbonate: step 1/1. It functions in the pathway pyrimidine metabolism; UMP biosynthesis via de novo pathway; (S)-dihydroorotate from bicarbonate: step 1/3. Functionally, large subunit of the glutamine-dependent carbamoyl phosphate synthetase (CPSase). CPSase catalyzes the formation of carbamoyl phosphate from the ammonia moiety of glutamine, carbonate, and phosphate donated by ATP, constituting the first step of 2 biosynthetic pathways, one leading to arginine and/or urea and the other to pyrimidine nucleotides. The large subunit (synthetase) binds the substrates ammonia (free or transferred from glutamine from the small subunit), hydrogencarbonate and ATP and carries out an ATP-coupled ligase reaction, activating hydrogencarbonate by forming carboxy phosphate which reacts with ammonia to form carbamoyl phosphate. This chain is Carbamoyl phosphate synthase large chain, found in Bacillus thuringiensis subsp. konkukian (strain 97-27).